Consider the following 135-residue polypeptide: Large ribosomal subunit protein uL16c (135 aa).

The protein belongs to the universal ribosomal protein uL16 family. In terms of assembly, part of the 50S ribosomal subunit.

It localises to the plastid. The protein resides in the chloroplast. This chain is Large ribosomal subunit protein uL16c, found in Lotus japonicus (Lotus corniculatus var. japonicus).